A 532-amino-acid polypeptide reads, in one-letter code: Membrane protein insertase YidC (532 aa).

A run of 5 helical transmembrane segments spans residues Phe-7 to Met-27, Leu-336 to Ile-356, Gly-413 to Ile-433, Leu-450 to Ile-470, and Pro-492 to Ile-512.

The protein belongs to the OXA1/ALB3/YidC family. Type 1 subfamily. Interacts with the Sec translocase complex via SecD. Specifically interacts with transmembrane segments of nascent integral membrane proteins during membrane integration.

It is found in the cell membrane. Its function is as follows. Required for the insertion and/or proper folding and/or complex formation of integral membrane proteins into the membrane. Involved in integration of membrane proteins that insert both dependently and independently of the Sec translocase complex, as well as at least some lipoproteins. Aids folding of multispanning membrane proteins. The polypeptide is Membrane protein insertase YidC (Buchnera aphidicola subsp. Acyrthosiphon pisum (strain APS) (Acyrthosiphon pisum symbiotic bacterium)).